The sequence spans 76 residues: Omega-conotoxin-like TxO1 (76 aa).

An N-terminal signal peptide occupies residues 1–22 (MKLTCVVIVAVLFLTVWTFATA). Positions 23–50 (DDSGNGLEKLFSNAHHEMKNPEASKLNE) are excised as a propeptide. 3 disulfide bridges follow: C52–C67, C59–C70, and C66–C75.

The protein belongs to the conotoxin O1 superfamily. As to expression, expressed by the venom duct.

It is found in the secreted. Functionally, omega-conotoxins act at presynaptic membranes, they bind and block voltage-gated calcium channels (Cav). The chain is Omega-conotoxin-like TxO1 from Conus textile (Cloth-of-gold cone).